The following is a 167-amino-acid chain: uncharacterized protein (167 aa).

2 consecutive transmembrane segments (helical) span residues 21-41 and 87-107; these read KIGL…IYKP and MIIT…YVFG. Basic and acidic residues predominate over residues 136–159; that stretch reads RKQRLKEQREKKEQKKEQKKEKKT. The segment at 136–167 is disordered; sequence RKQRLKEQREKKEQKKEQKKEKKTERRKKKKL.

Its subcellular location is the membrane. This is an uncharacterized protein from Schizosaccharomyces pombe (strain 972 / ATCC 24843) (Fission yeast).